The chain runs to 389 residues: S-adenosylmethionine synthase (389 aa).

H17 contacts ATP. D19 provides a ligand contact to Mg(2+). E45 serves as a coordination point for K(+). The L-methionine site is built by E58 and Q101. The segment at 101–111 is flexible loop; it reads QSPDIAQGVTE. ATP contacts are provided by residues 168 to 170, 234 to 235, D243, 249 to 250, A266, and K270; these read DSK, RF, and RK. Position 243 (D243) interacts with L-methionine. K274 is a binding site for L-methionine.

It belongs to the AdoMet synthase family. Homotetramer; dimer of dimers. Requires Mg(2+) as cofactor. It depends on K(+) as a cofactor.

Its subcellular location is the cytoplasm. The enzyme catalyses L-methionine + ATP + H2O = S-adenosyl-L-methionine + phosphate + diphosphate. It functions in the pathway amino-acid biosynthesis; S-adenosyl-L-methionine biosynthesis; S-adenosyl-L-methionine from L-methionine: step 1/1. Its function is as follows. Catalyzes the formation of S-adenosylmethionine (AdoMet) from methionine and ATP. The overall synthetic reaction is composed of two sequential steps, AdoMet formation and the subsequent tripolyphosphate hydrolysis which occurs prior to release of AdoMet from the enzyme. The protein is S-adenosylmethionine synthase of Geotalea uraniireducens (strain Rf4) (Geobacter uraniireducens).